Here is a 90-residue protein sequence, read N- to C-terminus: UPF0297 protein BH1268 (90 aa).

This sequence belongs to the UPF0297 family.

This is UPF0297 protein BH1268 from Halalkalibacterium halodurans (strain ATCC BAA-125 / DSM 18197 / FERM 7344 / JCM 9153 / C-125) (Bacillus halodurans).